The chain runs to 487 residues: Mu-like prophage FluMu tail sheath protein (487 aa).

Belongs to the myoviridae tail sheath protein family.

Its function is as follows. Major component of the tail. The sequence is that of Mu-like prophage FluMu tail sheath protein from Haemophilus influenzae (strain ATCC 51907 / DSM 11121 / KW20 / Rd).